The chain runs to 237 residues: Protein XpsM (237 aa).

The segment at 1-21 (MPAATWTASPSPPNWPVPMPR) is disordered. Residues 10–21 (PSPPNWPVPMPR) are compositionally biased toward pro residues.

This chain is Protein XpsM (xpsM), found in Xanthomonas campestris pv. campestris (strain ATCC 33913 / DSM 3586 / NCPPB 528 / LMG 568 / P 25).